A 220-amino-acid polypeptide reads, in one-letter code: Urease accessory protein UreE (220 aa).

Residues 145–220 (EGGAYSAGGH…QIHKRRPDNL (76 aa)) form a disordered region. Basic and acidic residues predominate over residues 156–177 (HGHDHGSHEHSAHDHGKHDHAP). Residues 178 to 188 (AKPATAATPAA) show a composition bias toward low complexity. The span at 191-206 (HGPDCNHGHDHAHEAK) shows a compositional bias: basic and acidic residues.

It belongs to the UreE family.

Its subcellular location is the cytoplasm. Involved in urease metallocenter assembly. Binds nickel. Probably functions as a nickel donor during metallocenter assembly. This chain is Urease accessory protein UreE, found in Polaromonas sp. (strain JS666 / ATCC BAA-500).